Here is a 164-residue protein sequence, read N- to C-terminus: Microfibrillar-associated protein 5 (164 aa).

The signal sequence occupies residues 1–28; it reads MLFLGQKALLLVLAISIPSDWLPLGVSG. Residues 30 to 32 carry the Cell attachment site motif; that stretch reads RGD. Asn-70 is a glycosylation site (N-linked (GlcNAc...) asparagine).

The protein belongs to the MFAP family. As to quaternary structure, interacts with TGFB2. Interacts with BMP2. Interacts with FBN1 (via N-terminal domain) and FBN2. In terms of processing, forms intermolecular disulfide bonds either with other MAGP-2 molecules or with other components of the microfibrils.

It is found in the secreted. The protein resides in the extracellular space. It localises to the extracellular matrix. Functionally, may play a role in hematopoiesis. In the cardiovascular system, could regulate growth factors or participate in cell signaling in maintaining large vessel integrity. Component of the elastin-associated microfibrils. The sequence is that of Microfibrillar-associated protein 5 (Mfap5) from Mus musculus (Mouse).